The primary structure comprises 1089 residues: Carbamoyl phosphate synthase large chain (1089 aa).

A carboxyphosphate synthetic domain region spans residues 1–399; the sequence is MPKRTDIKSI…SIQKALCSLE (399 aa). Residues R127, R167, G173, G174, E206, L208, E213, G239, V240, H241, Q283, and E297 each coordinate ATP. The ATP-grasp 1 domain occupies 131-326; that stretch reads KECMKKIGMD…IAKVATLLAV (196 aa). The Mg(2+) site is built by Q283, E297, and N299. Residues Q283, E297, and N299 each coordinate Mn(2+). The interval 400–553 is oligomerization domain; the sequence is RSLSGFDRVK…NVSELTQSKN (154 aa). The interval 554–951 is carbamoyl phosphate synthetic domain; the sequence is DAKDKKEKKV…SYAKSQIASF (398 aa). The 192-residue stretch at 680–871 folds into the ATP-grasp 2 domain; that stretch reads AEFITKLGIN…LAKVATRVMW (192 aa). ATP is bound by residues R716, Q755, L757, E762, G787, I788, H789, S790, Q830, and E842. Mg(2+) contacts are provided by Q830, E842, and N844. 3 residues coordinate Mn(2+): Q830, E842, and N844. Residues 952–1089 enclose the MGS-like domain; sequence NHLPEQGVVF…VKSLQEWLKS (138 aa). Positions 952–1089 are allosteric domain; it reads NHLPEQGVVF…VKSLQEWLKS (138 aa).

It belongs to the CarB family. As to quaternary structure, composed of two chains; the small (or glutamine) chain promotes the hydrolysis of glutamine to ammonia, which is used by the large (or ammonia) chain to synthesize carbamoyl phosphate. Tetramer of heterodimers (alpha,beta)4. Mg(2+) serves as cofactor. It depends on Mn(2+) as a cofactor.

The catalysed reaction is hydrogencarbonate + L-glutamine + 2 ATP + H2O = carbamoyl phosphate + L-glutamate + 2 ADP + phosphate + 2 H(+). The enzyme catalyses hydrogencarbonate + NH4(+) + 2 ATP = carbamoyl phosphate + 2 ADP + phosphate + 2 H(+). It functions in the pathway amino-acid biosynthesis; L-arginine biosynthesis; carbamoyl phosphate from bicarbonate: step 1/1. It participates in pyrimidine metabolism; UMP biosynthesis via de novo pathway; (S)-dihydroorotate from bicarbonate: step 1/3. In terms of biological role, large subunit of the glutamine-dependent carbamoyl phosphate synthetase (CPSase). CPSase catalyzes the formation of carbamoyl phosphate from the ammonia moiety of glutamine, carbonate, and phosphate donated by ATP, constituting the first step of 2 biosynthetic pathways, one leading to arginine and/or urea and the other to pyrimidine nucleotides. The large subunit (synthetase) binds the substrates ammonia (free or transferred from glutamine from the small subunit), hydrogencarbonate and ATP and carries out an ATP-coupled ligase reaction, activating hydrogencarbonate by forming carboxy phosphate which reacts with ammonia to form carbamoyl phosphate. The protein is Carbamoyl phosphate synthase large chain of Campylobacter jejuni subsp. jejuni serotype O:2 (strain ATCC 700819 / NCTC 11168).